Reading from the N-terminus, the 477-residue chain is E3 ubiquitin-protein ligase TRIM17 (477 aa).

The RING-type zinc finger occupies 16–66; the sequence is CSICLDYFTDPVMTACGHNFCRECIQMSWEKGKVKKGKKKQKGSFPCPECR. A B box-type zinc finger spans residues 94–135; the sequence is QKRDLCQAHQEPLKLFCQDDQSPICVVCREAQEHRMHRVLPL. Positions 99, 102, 121, and 127 each coordinate Zn(2+). The stretch at 135–226 forms a coiled coil; that stretch reads LDEAAREYKL…KLQDSKASLD (92 aa). Residues 276–475 form the B30.2/SPRY domain; that stretch reads AIKTLCRVPG…MVISTVTMWV (200 aa).

Belongs to the TRIM/RBCC family. In terms of assembly, interacts (via coiled coil) with TRIM44 (via coiled coil). Interacts with TRIM28; this interaction prevents TRIM28 activity on BCL2A1. Interacts with TRIM41; this interaction prevents TRIM41 activity on ZSCAN2. Interacts with BECN1. Interacts with NFATC3 and NFATC4; these interactions prevent NFATC3 and NFATC4 nuclear localization. Post-translationally, auto-ubiquitinated. As to expression, almost exclusively in the testis.

The protein localises to the cytoplasm. The protein resides in the lysosome. It carries out the reaction S-ubiquitinyl-[E2 ubiquitin-conjugating enzyme]-L-cysteine + [acceptor protein]-L-lysine = [E2 ubiquitin-conjugating enzyme]-L-cysteine + N(6)-ubiquitinyl-[acceptor protein]-L-lysine.. Its pathway is protein modification; protein ubiquitination. Its function is as follows. E3 ubiquitin ligase that plays important roles in the regulation of neuronal apoptosis, selective autophagy or cell proliferation. Stimulates the degradation of kinetochore ZW10 interacting protein ZWINT in a proteasome-dependent manner, leading to negative regulation of cell proliferation. Inhibits autophagic degradation of diverse known targets while contributing to autophagy of midbodies. Autophagy-inhibitory activity involves MCL1, which TRIM17 assembles into complexes with the key autophagy regulator BECN1. Controls neuronal apoptosis by mediating ubiquitination and degradation of MCL1 to initiate neuronal death. In addition, regulates NFAT transcription factors NFATC3 and NFATC4 activities by preventing their nuclear localization, thus inhibiting their transcriptional activities. Decreases TRIM41-mediated degradation of ZSCAN2 thereby stimulating alpha-synuclein/SNCA transcription in neuronal cells. Prevents the E3 ubiquitin-ligase activity of TRIM28 and its interaction with anti-apoptotic BCL2A1, blocking TRIM28 from ubiquitinating BCL2A1. This is E3 ubiquitin-protein ligase TRIM17 (Trim17) from Mus musculus (Mouse).